Here is a 309-residue protein sequence, read N- to C-terminus: MEKVLVFGHKNPDTDAICSAIAYAELKKELGMNAEPVRLGEISGETQFALNYFKVEGPRFVETVANEVDNVILVDHNERQQSANDIESVRVLEVIDHHRIANFETSDPIYYRCEPVGCTATILNKMYKENGVTIRKEVAGLMLSAIISDSLLFKSPTCTEQDVAAARELAEIAGVDADKYGLEMLKAGADLSGKTMEQLISLDAKEFQMGNAKVEIAQVNAVDTNDVLVHQAELEKVISAVVEEKGLDLFLFVVTDILTNDSVGLAIGKAANIVEKAYNVSLENNTATLKGVVSRKKQIVPVLTEAFQA.

Mn(2+) is bound by residues His9, Asp13, Asp15, Asp75, His97, and Asp149.

This sequence belongs to the PPase class C family. The cofactor is Mn(2+).

It is found in the cytoplasm. It catalyses the reaction diphosphate + H2O = 2 phosphate + H(+). The sequence is that of Probable manganese-dependent inorganic pyrophosphatase from Bacillus cereus (strain ZK / E33L).